The primary structure comprises 96 residues: Large ribosomal subunit protein eL14 (96 aa).

It belongs to the eukaryotic ribosomal protein eL14 family.

In Metallosphaera sedula (strain ATCC 51363 / DSM 5348 / JCM 9185 / NBRC 15509 / TH2), this protein is Large ribosomal subunit protein eL14.